Here is a 531-residue protein sequence, read N- to C-terminus: T-complex protein 1 subunit zeta-2 (531 aa).

The protein belongs to the TCP-1 chaperonin family. As to quaternary structure, component of the chaperonin-containing T-complex (TRiC), a heterooligomeric complex of about 850 to 900 kDa that forms two stacked rings, 12 to 16 nm in diameter. As to expression, testis specific.

Its subcellular location is the cytoplasm. Functionally, component of the chaperonin-containing T-complex (TRiC), a molecular chaperone complex that assists the folding of proteins upon ATP hydrolysis. The sequence is that of T-complex protein 1 subunit zeta-2 (Cct6b) from Mus musculus (Mouse).